The chain runs to 722 residues: Biotin--protein ligase (722 aa).

A disordered region spans residues 27–93 (KELGKASDKQ…EPAADGDPGL (67 aa)). Residues 46 to 55 (ASPEAQPAQG) show a composition bias toward low complexity. Position 295 is a phosphoserine (serine 295). Residues 459–648 (TRLGKVILFA…VLEKLIDRFQ (190 aa)) form the BPL/LPL catalytic domain.

The protein belongs to the biotin--protein ligase family. In terms of assembly, monomer.

Its subcellular location is the cytoplasm. It localises to the mitochondrion. It carries out the reaction apo-[methylmalonyl-CoA:pyruvate carboxytransferase] + biotin + ATP = holo-[methylmalonyl-CoA:pyruvate carboxytransferase] + AMP + diphosphate + H(+). The catalysed reaction is apo-[propionyl-CoA:carbon-dioxide ligase (ADP-forming)] + biotin + ATP = holo-[propionyl-CoA:carbon-dioxide ligase (ADP-forming)] + AMP + diphosphate + H(+). It catalyses the reaction apo-[3-methylcrotonoyl-CoA:carbon-dioxide ligase (ADP-forming)] + biotin + ATP = holo-[3-methylcrotonoyl-CoA:carbon-dioxide ligase (ADP-forming)] + AMP + diphosphate + H(+). The enzyme catalyses biotin + L-lysyl-[protein] + ATP = N(6)-biotinyl-L-lysyl-[protein] + AMP + diphosphate + H(+). Its function is as follows. Biotin--protein ligase catalyzing the biotinylation of the 4 biotin-dependent carboxylases acetyl-CoA-carboxylase, pyruvate carboxylase, propionyl-CoA carboxylase, and methylcrotonyl-CoA carboxylase. The polypeptide is Biotin--protein ligase (Mus musculus (Mouse)).